The sequence spans 407 residues: Probable tRNA pseudouridine synthase D (407 aa).

Asp81 functions as the Nucleophile in the catalytic mechanism. Residues 151 to 372 (GFPNYFGIQR…PGGRRELLIR (222 aa)) form the TRUD domain.

The protein belongs to the pseudouridine synthase TruD family.

It catalyses the reaction uridine(13) in tRNA = pseudouridine(13) in tRNA. Its function is as follows. Could be responsible for synthesis of pseudouridine from uracil-13 in transfer RNAs. The chain is Probable tRNA pseudouridine synthase D from Pyrococcus furiosus (strain ATCC 43587 / DSM 3638 / JCM 8422 / Vc1).